The following is a 155-amino-acid chain: Endoribonuclease YbeY (155 aa).

Residues H114, H118, and H124 each coordinate Zn(2+).

This sequence belongs to the endoribonuclease YbeY family. The cofactor is Zn(2+).

The protein localises to the cytoplasm. In terms of biological role, single strand-specific metallo-endoribonuclease involved in late-stage 70S ribosome quality control and in maturation of the 3' terminus of the 16S rRNA. In Erwinia tasmaniensis (strain DSM 17950 / CFBP 7177 / CIP 109463 / NCPPB 4357 / Et1/99), this protein is Endoribonuclease YbeY.